Reading from the N-terminus, the 466-residue chain is RUS family member 1 (466 aa).

An N-acetylalanine modification is found at alanine 2. Residues 245-265 (LLMLPLVSDCLSLSLGCFILL) form a helical membrane-spanning segment.

Belongs to the RUS1 family.

It localises to the membrane. This is RUS family member 1 (Rusf1) from Rattus norvegicus (Rat).